A 166-amino-acid chain; its full sequence is Large ribosomal subunit protein uL11z (166 aa).

It belongs to the universal ribosomal protein uL11 family.

In terms of biological role, binds directly to 26S ribosomal RNA. This chain is Large ribosomal subunit protein uL11z (RPL12A), found in Arabidopsis thaliana (Mouse-ear cress).